The following is a 429-amino-acid chain: Histidine--tRNA ligase (429 aa).

Belongs to the class-II aminoacyl-tRNA synthetase family. In terms of assembly, homodimer.

The protein resides in the cytoplasm. The enzyme catalyses tRNA(His) + L-histidine + ATP = L-histidyl-tRNA(His) + AMP + diphosphate + H(+). This is Histidine--tRNA ligase from Rippkaea orientalis (strain PCC 8801 / RF-1) (Cyanothece sp. (strain PCC 8801)).